Consider the following 144-residue polypeptide: Nucleoside diphosphate kinase (144 aa).

ATP is bound by residues Lys5, Phe53, Arg81, Thr87, Arg98, and Asn108. The active-site Pros-phosphohistidine intermediate is His111.

The protein belongs to the NDK family. The cofactor is Mg(2+).

It catalyses the reaction a 2'-deoxyribonucleoside 5'-diphosphate + ATP = a 2'-deoxyribonucleoside 5'-triphosphate + ADP. The catalysed reaction is a ribonucleoside 5'-diphosphate + ATP = a ribonucleoside 5'-triphosphate + ADP. In terms of biological role, major role in the synthesis of nucleoside triphosphates other than ATP. The ATP gamma phosphate is transferred to the NDP beta phosphate via a ping-pong mechanism, using a phosphorylated active-site intermediate. This Solanum lycopersicum (Tomato) protein is Nucleoside diphosphate kinase.